The sequence spans 386 residues: Magnesium transporter MRS2-7 (386 aa).

A run of 2 helical transmembrane segments spans residues leucine 321–glycine 341 and isoleucine 355–leucine 375. A Required for magnesium transport activity motif is present at residues glycine 341–asparagine 343.

It belongs to the CorA metal ion transporter (MIT) (TC 1.A.35.5) family. In terms of tissue distribution, isoform 1 is expressed in the whole plant. Isoform 4 is expressed only in roots and flowers.

The protein localises to the endoplasmic reticulum membrane. Functionally, low-affinity magnesium transporter that mediates the influx of magnesium. The chain is Magnesium transporter MRS2-7 (MRS2-7) from Arabidopsis thaliana (Mouse-ear cress).